The sequence spans 259 residues: MFFVLSPAKNLNEKDPAPVSEFTQPDLLAESDILMQQLRELAPQQIAELMHVSDKIALLNAQRNAEWNTPFTPENAKQAVFMFNGDVYEGMDANTLDIGQIRYLQNHVRLLSGLYGLLRPLDLIQPYRLEMGTAFANLRGKNLYEFWGDIITNLLNDTLAQAGSNTLVNLASQEYFKSVNTKKLRARLITPIFKDEKNGKYKIISFYAKRARGLMVRYAAEHHITDPEMLKNFNYEGYAFNDAASNESEWVFMRSEQIK.

It belongs to the UPF0246 family.

The chain is UPF0246 protein NMB0895 from Neisseria meningitidis serogroup B (strain ATCC BAA-335 / MC58).